The following is a 94-amino-acid chain: Neutrophil defensin 3 (94 aa).

A signal peptide spans 1 to 19; the sequence is MRTLAILAAILLVALQAQA. Positions 20 to 38 are excised as a propeptide; that stretch reads EPLQARADEVAAAPEQIAA. 3 disulfide bridges follow: cysteine 66/cysteine 94, cysteine 68/cysteine 83, and cysteine 73/cysteine 93.

The protein belongs to the alpha-defensin family. Dimer. As to quaternary structure, (Microbial infection) Interacts with herpes virus 1 HHV-1 envelope glycoprotein B; this interaction inhibits viral infection.

Its subcellular location is the secreted. In terms of biological role, effector molecule of the innate immune system that acts via antibiotic-like properties against a broad array of infectious agents including bacteria, fungi, and viruses. Possesses the ability to neutralize bacterial toxins such as B.anthracis lethal factor, Clostridium difficile cytotoxin B as well as leukocidin produced by Staphylococcus aureus. Also blocks herpes simplex virus infection by interacting with envelope glycoprotein B and thus preventing its binding to heparan sulfate, the receptor for attachment. The polypeptide is Neutrophil defensin 3 (DEFA3) (Homo sapiens (Human)).